The primary structure comprises 368 residues: tRNA/tmRNA (uracil-C(5))-methyltransferase (368 aa).

S-adenosyl-L-methionine contacts are provided by Q190, Y218, N223, E239, and D301. The active-site Nucleophile is C326. The active-site Proton acceptor is E360.

The protein belongs to the class I-like SAM-binding methyltransferase superfamily. RNA M5U methyltransferase family. TrmA subfamily.

It catalyses the reaction uridine(54) in tRNA + S-adenosyl-L-methionine = 5-methyluridine(54) in tRNA + S-adenosyl-L-homocysteine + H(+). It carries out the reaction uridine(341) in tmRNA + S-adenosyl-L-methionine = 5-methyluridine(341) in tmRNA + S-adenosyl-L-homocysteine + H(+). Functionally, dual-specificity methyltransferase that catalyzes the formation of 5-methyluridine at position 54 (m5U54) in all tRNAs, and that of position 341 (m5U341) in tmRNA (transfer-mRNA). This chain is tRNA/tmRNA (uracil-C(5))-methyltransferase, found in Aliivibrio fischeri (strain MJ11) (Vibrio fischeri).